The primary structure comprises 456 residues: N(6)-adenosine-methyltransferase non-catalytic subunit METTL14 (456 aa).

A disordered region spans residues 50 to 75; the sequence is TCRASYDTSAPNAKRKYLDEGETDED. 2 interaction with METTL3 regions span residues 135 to 136 and 237 to 238; these read RD and SG. The positively charged region required for RNA-binding stretch occupies residues 245–254; it reads RVCLRKWGYR. 2 interaction with METTL3 regions span residues 255–258 and 278–287; these read RCED and KAVFQRTKEH. The tract at residues 297-298 is positively charged region required for RNA-binding; it reads KR. The tract at residues 308 to 312 is interaction with METTL3; that stretch reads NVDID. The segment at 393-456 is disordered; it reads ERLRPKSPPP…GAHRGGFPPR (64 aa). Ser-399 is subject to Phosphoserine. Positions 409–423 are enriched in gly residues; sequence GGGAPRGGGRGGTSA. A compositionally biased stretch (basic and acidic residues) spans 425 to 440; sequence RGRERNRSNFRGERGG. A compositionally biased stretch (gly residues) spans 441–450; that stretch reads FRGGRGGAHR.

It belongs to the MT-A70-like family. Heterodimer; heterodimerizes with METTL3 to form an antiparallel heterodimer that constitutes an active methyltransferase. Component of the WMM complex, a N6-methyltransferase complex composed of a catalytic subcomplex, named MAC, and of an associated subcomplex, named MACOM. The MAC subcomplex is composed of METTL3 and METTL14. The MACOM subcomplex is composed of WTAP, ZC3H13, CBLL1/HAKAI, VIRMA, and, in some cases of RBM15 (RBM15 or RBM15B).

The protein localises to the nucleus. Its function is as follows. The METTL3-METTL14 heterodimer forms a N6-methyltransferase complex that methylates adenosine residues at the N(6) position of some mRNAs and regulates the circadian clock, differentiation of embryonic stem cells and cortical neurogenesis. In the heterodimer formed with METTL3, METTL14 constitutes the RNA-binding scaffold that recognizes the substrate rather than the catalytic core. N6-methyladenosine (m6A), which takes place at the 5'-[AG]GAC-3' consensus sites of some mRNAs, plays a role in mRNA stability and processing. M6A acts as a key regulator of mRNA stability by promoting mRNA destabilization and degradation. In embryonic stem cells (ESCs), m6A methylation of mRNAs encoding key naive pluripotency-promoting transcripts results in transcript destabilization. M6A regulates spermatogonial differentiation and meiosis and is essential for male fertility and spermatogenesis. M6A also regulates cortical neurogenesis: m6A methylation of transcripts related to transcription factors, neural stem cells, the cell cycle and neuronal differentiation during brain development promotes their destabilization and decay, promoting differentiation of radial glial cells. The chain is N(6)-adenosine-methyltransferase non-catalytic subunit METTL14 from Homo sapiens (Human).